Reading from the N-terminus, the 273-residue chain is MKSPTGVLNIDVMEKRDKTVPIKVYHKDALKVTQPIYLDKYGRAYYYIMNSGGGYLKGDFYSININVGKDAKTYITSQSATKVYKTPNSYALQELNFYIGQNAAMEYLPDPLIMYKDAAYKQKTNIYMQNNSTLILCDSVTPGWSPNMEKFTYQYFDSLTKIYMENKLVVYDHLLLNPFKESLDQMGILNQYSHYGTFIVINENVTNDLIAALKTSFSNTNNMKIGIASTTCKGFVIRILSHNTEDMESIFFQCHRFVRENCLHEELTSYRKY.

Belongs to the UreD family. UreD, UreF and UreG form a complex that acts as a GTP-hydrolysis-dependent molecular chaperone, activating the urease apoprotein by helping to assemble the nickel containing metallocenter of UreC. The UreE protein probably delivers the nickel.

The protein resides in the cytoplasm. In terms of biological role, required for maturation of urease via the functional incorporation of the urease nickel metallocenter. This Bacillus cereus (strain ATCC 10987 / NRS 248) protein is Urease accessory protein UreD.